The primary structure comprises 500 residues: Cobyric acid synthase (500 aa).

The GATase cobBQ-type domain occupies Lys-251–Ala-449. Residue Cys-332 is the Nucleophile of the active site. His-441 is a catalytic residue.

Belongs to the CobB/CobQ family. CobQ subfamily.

It functions in the pathway cofactor biosynthesis; adenosylcobalamin biosynthesis. Its function is as follows. Catalyzes amidations at positions B, D, E, and G on adenosylcobyrinic A,C-diamide. NH(2) groups are provided by glutamine, and one molecule of ATP is hydrogenolyzed for each amidation. This Marinomonas sp. (strain MWYL1) protein is Cobyric acid synthase.